Consider the following 285-residue polypeptide: Malectin (285 aa).

The signal sequence occupies residues 1 to 26; that stretch reads MRRVTLHCAARLVIAALWLLVEVCRA. At 27–262 the chain is on the lumenal side; it reads ESGAQSLAER…TPNPYATDNS (236 aa). The a carbohydrate site is built by tyrosine 71, tyrosine 93, tyrosine 120, phenylalanine 121, and aspartate 190. The segment at 209 to 258 is disordered; sequence KLQPHPGLEKREEEEEEEEEGEGPEGEKKSASTSPKNPVRSGPRTPNPYA. Positions 220–232 are enriched in acidic residues; that stretch reads EEEEEEEEEGEGP. The N-linked (GlcNAc...) asparagine glycan is linked to asparagine 261. Residues 263 to 283 form a helical membrane-spanning segment; sequence SLMFPILVAFGVFIPTLFCLC. At 284–285 the chain is on the cytoplasmic side; the sequence is RL.

The protein belongs to the malectin family.

The protein localises to the endoplasmic reticulum membrane. Functionally, carbohydrate-binding protein with a strong ligand preference for Glc2-N-glycan. May play a role in the early steps of protein N-glycosylation. The chain is Malectin from Danio rerio (Zebrafish).